The chain runs to 335 residues: Glucose-dependent insulinotropic receptor (335 aa).

The Extracellular segment spans residues 1 to 12 (MESSFSFGVILA). The helical transmembrane segment at 13–33 (VLASLIIATNTLVAVAVLLLI) threads the bilayer. The Cytoplasmic portion of the chain corresponds to 34–37 (HKND). A helical membrane pass occupies residues 38–58 (GVSLCFTLNLAVADTLIGVAI). Topologically, residues 59 to 81 (SGLLTDQLSSPSRPTQKTLCSLR) are extracellular. The helical transmembrane segment at 82–102 (MAFVTSSAAASVLTVMLITFD) threads the bilayer. Over 103–125 (RYLAIKQPFRYLKIMSGFVAGAC) the chain is Cytoplasmic. The chain crosses the membrane as a helical span at residues 126–146 (IAGLWLVSYLIGFLPLGIPMF). The Extracellular segment spans residues 147–164 (QQTAYKGQCSFFAVFHPH). The helical transmembrane segment at 165–185 (FVLTLSCVGFFPAMLLFVFFY) threads the bilayer. Topologically, residues 186–226 (CDMLKIASMHSQQIRKMEHAGAMAGGYRSPRTPSDFKALRT) are cytoplasmic. The helical transmembrane segment at 227–247 (VSVLIGSFALSWTPFLITGIV) threads the bilayer. The Extracellular portion of the chain corresponds to 248 to 262 (QVACQECHLYLVLER). Residues 263–283 (YLWLLGVGNSLLNPLIYAYWQ) traverse the membrane as a helical segment. Over 284 to 335 (KEVRLQLYHMALGVKKVLTSFLLFLSARNCGPERPRESSCHIVTISSSEFDG) the chain is Cytoplasmic.

It belongs to the G-protein coupled receptor 1 family. In terms of tissue distribution, predominantly expressed in the pancreas, especially in the islets.

The protein resides in the cell membrane. In terms of biological role, receptor for the endogenous fatty-acid ethanolamide oleoylethanolamide (OEA) and lysophosphatidylcholine (LPC). Functions as a glucose-dependent insulinotropic receptor. The activity of this receptor is mediated by G proteins which activate adenylate cyclase. Seems to act through a G(s) mediated pathway. In Homo sapiens (Human), this protein is Glucose-dependent insulinotropic receptor (GPR119).